The primary structure comprises 58 residues: Small ribosomal subunit protein eS30 (58 aa).

The segment at 1–58 (MGKVHGSLARAGKVKNQTPKVPKLDKKKRLTGRAKKRQLYNRRFSDNGGRKKGPNSKA) is disordered. Basic residues predominate over residues 25 to 40 (DKKKRLTGRAKKRQLY).

This sequence belongs to the eukaryotic ribosomal protein eS30 family. In terms of assembly, component of the small ribosomal subunit. Mature ribosomes consist of a small (40S) and a large (60S) subunit. The 40S subunit contains about 32 different proteins and 1 molecule of RNA (18S). The 60S subunit contains about 42 different proteins and 3 molecules of RNA (28S, 5.8S and 5S).

It localises to the cytoplasm. Component of the ribosome, a large ribonucleoprotein complex responsible for the synthesis of proteins in the cell. The small ribosomal subunit (SSU) binds messenger RNAs (mRNAs) and translates the encoded message by selecting cognate aminoacyl-transfer RNA (tRNA) molecules. The large subunit (LSU) contains the ribosomal catalytic site termed the peptidyl transferase center (PTC), which catalyzes the formation of peptide bonds, thereby polymerizing the amino acids delivered by tRNAs into a polypeptide chain. The nascent polypeptides leave the ribosome through a tunnel in the LSU and interact with protein factors that function in enzymatic processing, targeting, and the membrane insertion of nascent chains at the exit of the ribosomal tunnel. The sequence is that of Small ribosomal subunit protein eS30 from Plasmodium falciparum (isolate 3D7).